Reading from the N-terminus, the 204-residue chain is Large ribosomal subunit protein eL15 (204 aa).

It belongs to the eukaryotic ribosomal protein eL15 family.

The sequence is that of Large ribosomal subunit protein eL15 (RpL15) from Anopheles gambiae (African malaria mosquito).